A 447-amino-acid polypeptide reads, in one-letter code: Retinoic acid receptor alpha (447 aa).

Residues 1–79 (MAGKGNPVPG…PPPPPRVYKP (79 aa)) are modulating. Residues 47–61 (TPSPATIETQSTSSE) show a composition bias toward polar residues. The disordered stretch occupies residues 47–72 (TPSPATIETQSTSSEEIVPSPPSPPP). NR C4-type zinc fingers lie at residues 80–100 (CFVC…CEGC) and 116–140 (CHRE…LQKC). Residues 80–145 (CFVCQDKSSG…RLQKCLEVGM (66 aa)) constitute a DNA-binding region (nuclear receptor). A hinge region spans residues 146 to 174 (SKESVRNDRNKKKKDEKKPECIENYVLSP). Residues 175-409 (DTEQMINRVR…PLIQEMLENS (235 aa)) enclose the NR LBD domain. A 9aaTAD motif is present at residues 400–408 (PLIQEMLEN). The interval 407–447 (ENSEGLESGATGSRPSGAPPGSCSPSLSPSSAQSSPPTQSP) is disordered. Over residues 414-447 (SGATGSRPSGAPPGSCSPSLSPSSAQSSPPTQSP) the composition is skewed to low complexity.

Belongs to the nuclear hormone receptor family. NR1 subfamily. As to quaternary structure, heterodimer; with an rxr molecule. Binds DNA preferentially as a rar/rxr heterodimer.

It is found in the nucleus. Its function is as follows. Receptor for retinoic acid. Retinoic acid receptors bind as heterodimers to their target response elements in response to their ligands, all-trans or 9-cis retinoic acid, and regulate gene expression in various biological processes. The rar/rxr heterodimers bind to the retinoic acid response elements (RARE) composed of tandem 5'-AGGTCA-3' sites known as DR1-DR5. The sequence is that of Retinoic acid receptor alpha (rara) from Takifugu rubripes (Japanese pufferfish).